We begin with the raw amino-acid sequence, 122 residues long: Large ribosomal subunit protein uL18 (122 aa).

The protein belongs to the universal ribosomal protein uL18 family. Part of the 50S ribosomal subunit; part of the 5S rRNA/L5/L18/L25 subcomplex. Contacts the 5S and 23S rRNAs.

In terms of biological role, this is one of the proteins that bind and probably mediate the attachment of the 5S RNA into the large ribosomal subunit, where it forms part of the central protuberance. This is Large ribosomal subunit protein uL18 from Desulforapulum autotrophicum (strain ATCC 43914 / DSM 3382 / VKM B-1955 / HRM2) (Desulfobacterium autotrophicum).